We begin with the raw amino-acid sequence, 147 residues long: UPF0306 protein YhbP (147 aa).

The protein belongs to the UPF0306 family.

The polypeptide is UPF0306 protein YhbP (Escherichia coli (strain SMS-3-5 / SECEC)).